The primary structure comprises 469 residues: IME2-dependent-signaling protein (469 aa).

Met-1 is subject to N-acetylmethionine. Thr-13 is modified (phosphothreonine). Disordered regions lie at residues Lys-22–Met-55, Ala-67–Gln-92, and Asp-117–Thr-143. A phosphoserine mark is found at Ser-23, Ser-27, and Ser-39. Composition is skewed to polar residues over residues Ser-25–Gly-42 and Ala-67–Gln-82. A phosphoserine mark is found at Ser-122, Ser-130, Ser-136, Ser-147, and Ser-148.

In terms of biological role, seems to act indirectly to modify IME2 activity, thus permitting IME2 to carry out later meiotic functions. The polypeptide is IME2-dependent-signaling protein (IDS2) (Saccharomyces cerevisiae (strain ATCC 204508 / S288c) (Baker's yeast)).